Consider the following 199-residue polypeptide: Recombination protein RecR (199 aa).

Residues 59-74 (CLNCGNVGTSDICALC) form a C4-type zinc finger. The Toprim domain occupies 82 to 176 (GELCVVEDVA…KLTSLAQGVP (95 aa)).

Belongs to the RecR family.

Functionally, may play a role in DNA repair. It seems to be involved in an RecBC-independent recombinational process of DNA repair. It may act with RecF and RecO. The chain is Recombination protein RecR from Ruegeria sp. (strain TM1040) (Silicibacter sp.).